The chain runs to 360 residues: Probable protein phosphatase 2C 54 (360 aa).

The disordered stretch occupies residues 1-39; that stretch reads MCVEESEGAERLDFGEPAAAAADAGKSKSKSPDELPSPR. One can recognise a PPM-type phosphatase domain in the interval 65–325; it reads RSGDWSDIGG…DNLTAVLVSF (261 aa). Mn(2+) contacts are provided by Asp-109, Gly-110, Asp-273, and Asp-316.

It belongs to the PP2C family. Mg(2+) is required as a cofactor. Mn(2+) serves as cofactor.

The enzyme catalyses O-phospho-L-seryl-[protein] + H2O = L-seryl-[protein] + phosphate. It carries out the reaction O-phospho-L-threonyl-[protein] + H2O = L-threonyl-[protein] + phosphate. This chain is Probable protein phosphatase 2C 54, found in Oryza sativa subsp. japonica (Rice).